Reading from the N-terminus, the 440-residue chain is Thymidine phosphorylase (440 aa).

The protein belongs to the thymidine/pyrimidine-nucleoside phosphorylase family. As to quaternary structure, homodimer.

It carries out the reaction thymidine + phosphate = 2-deoxy-alpha-D-ribose 1-phosphate + thymine. It participates in pyrimidine metabolism; dTMP biosynthesis via salvage pathway; dTMP from thymine: step 1/2. Functionally, the enzymes which catalyze the reversible phosphorolysis of pyrimidine nucleosides are involved in the degradation of these compounds and in their utilization as carbon and energy sources, or in the rescue of pyrimidine bases for nucleotide synthesis. The polypeptide is Thymidine phosphorylase (Escherichia coli O127:H6 (strain E2348/69 / EPEC)).